The primary structure comprises 1173 residues: Tectonin beta-propeller repeat-containing protein 1 (1173 aa).

4 TECPR repeats span residues 209–240 (LSVW…TELE), 254–285 (DLLW…TIVE), 301–332 (NVVW…IEMV), and 344–376 (DQVF…KSIV). The segment at 403–489 (IKEHSDSPIP…AGPVPKAGAP (87 aa)) is disordered. Positions 409 to 422 (SPIPSDIESSSEPE) are enriched in low complexity. The span at 424-434 (SAVQENSSDSS) shows a compositional bias: polar residues. A PH domain is found at 609 to 718 (VWVKTGALQW…WLVLLSMSCY (110 aa)). TECPR repeat units lie at residues 730–757 (QAIW…TNGR), 952–983 (IALW…LHVG), 997–1028 (LQVW…YHIP), 1043–1074 (TSVF…EHMS), and 1086–1126 (DQIW…DYGI). The interval 1147 to 1173 (QPKENATEKPDPQEENGESAFSHIANC) is disordered.

Belongs to the TECPR1 family.

It localises to the cytoplasmic vesicle. Its subcellular location is the autophagosome membrane. The protein resides in the lysosome membrane. Functionally, tethering factor involved in autophagy. Involved in autophagosome maturation by promoting the autophagosome fusion with lysosomes. Binds phosphatidylinositol-3-phosphate (PtdIns(3)P) present at the surface of autophagosomes. This chain is Tectonin beta-propeller repeat-containing protein 1 (tecpr1), found in Xenopus tropicalis (Western clawed frog).